Here is a 180-residue protein sequence, read N- to C-terminus: Ribulose bisphosphate carboxylase small subunit, chloroplastic (180 aa).

The N-terminal 56 residues, 1-56 (MASSVLSSAAVATRSNVAQANMVAPFTGLKSAASFPVSRKQNLDITSIASNGGRVQ), are a transit peptide targeting the chloroplast.

This sequence belongs to the RuBisCO small chain family. As to quaternary structure, heterohexadecamer of 8 large and 8 small subunits. In terms of assembly, (Microbial infection) Binds to tobamovirus movement protein at the plasmodesmata (e.g. tomato mosaic virus MP AC P69513); this interaction seems required for viral systemic movement.

The protein resides in the plastid. The protein localises to the chloroplast. It is found in the cell junction. It localises to the plasmodesma. In terms of biological role, ruBisCO catalyzes two reactions: the carboxylation of D-ribulose 1,5-bisphosphate, the primary event in carbon dioxide fixation, as well as the oxidative fragmentation of the pentose substrate. Both reactions occur simultaneously and in competition at the same active site. Although the small subunit is not catalytic it is essential for maximal activity. Involved in antiviral defenses. Its function is as follows. (Microbial infection) Required for tobamovirus movement (e.g. tobacco mosaic virus (TMV)). The chain is Ribulose bisphosphate carboxylase small subunit, chloroplastic from Nicotiana benthamiana.